Here is a 297-residue protein sequence, read N- to C-terminus: 4-hydroxy-tetrahydrodipicolinate synthase (297 aa).

Thr-45 is a pyruvate binding site. Tyr-133 serves as the catalytic Proton donor/acceptor. Lys-161 acts as the Schiff-base intermediate with substrate in catalysis. Residue Ile-203 coordinates pyruvate.

This sequence belongs to the DapA family. Homotetramer; dimer of dimers.

The protein localises to the cytoplasm. The enzyme catalyses L-aspartate 4-semialdehyde + pyruvate = (2S,4S)-4-hydroxy-2,3,4,5-tetrahydrodipicolinate + H2O + H(+). The protein operates within amino-acid biosynthesis; L-lysine biosynthesis via DAP pathway; (S)-tetrahydrodipicolinate from L-aspartate: step 3/4. In terms of biological role, catalyzes the condensation of (S)-aspartate-beta-semialdehyde [(S)-ASA] and pyruvate to 4-hydroxy-tetrahydrodipicolinate (HTPA). In Buchnera aphidicola subsp. Cinara cedri (strain Cc), this protein is 4-hydroxy-tetrahydrodipicolinate synthase.